A 328-amino-acid chain; its full sequence is Carbonic anhydrase-related protein 11 (328 aa).

An N-terminal signal peptide occupies residues 1–23 (MGGAARLSAPQALVLWAALGAAA). One can recognise an Alpha-carbonic anhydrase domain in the interval 33-303 (DWWSYKENLQ…LAHRALRGNR (271 aa)). N-linked (GlcNAc...) asparagine glycosylation is present at Asn118. The segment at 300 to 328 (RGNRDPRHPERRCRGPNYRLHVDGGPHGR) is disordered. The segment covering 319 to 328 (LHVDGGPHGR) has biased composition (basic and acidic residues).

This sequence belongs to the alpha-carbonic anhydrase family.

The protein localises to the secreted. Does not have a catalytic activity. This is Carbonic anhydrase-related protein 11 (Ca11) from Mus musculus (Mouse).